The primary structure comprises 171 residues: Phosphopantetheine adenylyltransferase (171 aa).

Residue T9 coordinates substrate. Residues 9–10 (TF) and H17 each bind ATP. Residues K41, L78, and R92 each contribute to the substrate site. Residues 93–95 (GLR), E103, and 128–134 (HQAIASK) contribute to the ATP site.

Belongs to the bacterial CoaD family. In terms of assembly, homohexamer. Mg(2+) is required as a cofactor.

Its subcellular location is the cytoplasm. It catalyses the reaction (R)-4'-phosphopantetheine + ATP + H(+) = 3'-dephospho-CoA + diphosphate. The protein operates within cofactor biosynthesis; coenzyme A biosynthesis; CoA from (R)-pantothenate: step 4/5. Reversibly transfers an adenylyl group from ATP to 4'-phosphopantetheine, yielding dephospho-CoA (dPCoA) and pyrophosphate. The chain is Phosphopantetheine adenylyltransferase from Dinoroseobacter shibae (strain DSM 16493 / NCIMB 14021 / DFL 12).